The chain runs to 182 residues: MFIKDAYNMRALCTALEQSAPDTIINTSKEENNSYYCATAHLLRTDVCSLVNRVGIEPLKSGSILSTLEELWQAVGIIYRLYEWQHVSDIDTNFKKLPNNSDFGLVFSVLDCDIGYVITGKKDSKGNIELYDPKNSLLIENDDIKKYLYDENFHRFCIMLIISKSELEELSRESCDQKCIMG.

Positions methionine 1 to isoleucine 24 are cleaved as a signal peptide.

The protein localises to the secreted. Its function is as follows. May function as a virulence determinant. This chain is Protein YopQ (yopQ), found in Yersinia enterocolitica.